Consider the following 238-residue polypeptide: Probable transcriptional regulatory protein CT_457 (238 aa).

The interval methionine 1–lysine 21 is disordered. Residues asparagine 9–lysine 21 are compositionally biased toward basic residues.

The protein belongs to the TACO1 family.

It localises to the cytoplasm. The sequence is that of Probable transcriptional regulatory protein CT_457 from Chlamydia trachomatis serovar D (strain ATCC VR-885 / DSM 19411 / UW-3/Cx).